The following is a 647-amino-acid chain: Probable cobalt/nickel-exporting P-type ATPase (647 aa).

Helical transmembrane passes span 33–53 (WAAA…LGAP), 55–75 (AVVW…PAWV), 94–114 (AAIG…IVIF), 260–280 (AGVV…GADL), and 291–311 (MIVA…LSAI). Asp339 acts as the 4-aspartylphosphate intermediate in catalysis. Asp532 and Asp536 together coordinate Mg(2+). Residues 587-607 (VIANLVMAGAAITTLVLWDLF) traverse the membrane as a helical segment.

It belongs to the cation transport ATPase (P-type) (TC 3.A.3) family. Type IB subfamily.

It is found in the cell membrane. It catalyses the reaction Ni(2+)(out) + ATP + H2O = Ni(2+)(in) + ADP + phosphate + H(+). The enzyme catalyses Co(2+)(out) + ATP + H2O = Co(2+)(in) + ADP + phosphate + H(+). Its function is as follows. Involved in heavy metal homeostasis. Probably exports nickel and cobalt ions out of the cell. This is Probable cobalt/nickel-exporting P-type ATPase (ctpD) from Mycolicibacterium smegmatis (strain ATCC 700084 / mc(2)155) (Mycobacterium smegmatis).